The primary structure comprises 172 residues: ATP synthase subunit b (172 aa).

The chain crosses the membrane as a helical span at residues 13 to 33; sequence GINGGDILFQLVMFLILLALL.

The protein belongs to the ATPase B chain family. F-type ATPases have 2 components, F(1) - the catalytic core - and F(0) - the membrane proton channel. F(1) has five subunits: alpha(3), beta(3), gamma(1), delta(1), epsilon(1). F(0) has three main subunits: a(1), b(2) and c(10-14). The alpha and beta chains form an alternating ring which encloses part of the gamma chain. F(1) is attached to F(0) by a central stalk formed by the gamma and epsilon chains, while a peripheral stalk is formed by the delta and b chains.

Its subcellular location is the cell membrane. Its function is as follows. F(1)F(0) ATP synthase produces ATP from ADP in the presence of a proton or sodium gradient. F-type ATPases consist of two structural domains, F(1) containing the extramembraneous catalytic core and F(0) containing the membrane proton channel, linked together by a central stalk and a peripheral stalk. During catalysis, ATP synthesis in the catalytic domain of F(1) is coupled via a rotary mechanism of the central stalk subunits to proton translocation. Component of the F(0) channel, it forms part of the peripheral stalk, linking F(1) to F(0). The protein is ATP synthase subunit b of Priestia megaterium (strain ATCC 12872 / QMB1551) (Bacillus megaterium).